Here is an 868-residue protein sequence, read N- to C-terminus: mRNA-capping enzyme (868 aa).

Lys-282 serves as the catalytic N6-GMP-lysine intermediate. An mRNA cap 0 methyltransferase domain is found at 594-868; the sequence is GIYRAQTALI…LFGFICLRKN (275 aa). Residues Lys-607, Gly-624, Asp-646, and 710 to 712 contribute to the S-adenosyl-L-methionine site; that span reads LFI.

In the N-terminal section; belongs to the dsDNA virus mRNA guanylyltransferase family. This sequence in the C-terminal section; belongs to the class I-like SAM-binding methyltransferase superfamily. mRNA cap 0 methyltransferase family. Part of the viral DNA-directed RNA polymerase that consists of 8 polII-like subunits (RPB1, RPB2, RPB3, RPB5, RPB6, RPB7, RPB9, RPB10), a capping enzyme and a termination factor.

It localises to the virion. The catalysed reaction is a 5'-end triphospho-ribonucleoside in mRNA + H2O = a 5'-end diphospho-ribonucleoside in mRNA + phosphate + H(+). It carries out the reaction a 5'-end diphospho-ribonucleoside in mRNA + GTP + H(+) = a 5'-end (5'-triphosphoguanosine)-ribonucleoside in mRNA + diphosphate. The enzyme catalyses a 5'-end (5'-triphosphoguanosine)-ribonucleoside in mRNA + S-adenosyl-L-methionine = a 5'-end (N(7)-methyl 5'-triphosphoguanosine)-ribonucleoside in mRNA + S-adenosyl-L-homocysteine. The protein operates within mRNA processing; mRNA capping. Its function is as follows. Probably catalyzes the second reaction in the mRNA cap formation pathway. Forms a covalent complex with GTP. This Ornithodoros (relapsing fever ticks) protein is mRNA-capping enzyme.